The sequence spans 443 residues: Cyclin-A2-1 (443 aa).

The span at 1–10 (MHRASSKHTN) shows a compositional bias: basic residues. Residues 1–61 (MHRASSKHTN…KRVARPSNKR (61 aa)) form a disordered region. Residues 11–25 (AKKEAISTSKIRDNN) are compositionally biased toward basic and acidic residues.

This sequence belongs to the cyclin family. Cyclin AB subfamily. In terms of tissue distribution, expressed in tissues with active cell division: apical root and shoot meristems, lateral root and leaf primordia, floral meristems and developing pollen.

Its function is as follows. May negatively regulate endocycles and act as a regulator of ploidy levels in endoreduplication. The chain is Cyclin-A2-1 (CYCA2-1) from Arabidopsis thaliana (Mouse-ear cress).